A 576-amino-acid polypeptide reads, in one-letter code: Proteinaceous RNase P 3 (576 aa).

A compositionally biased stretch (basic and acidic residues) spans 65–75 (NRRSRHDDESP). The disordered stretch occupies residues 65–88 (NRRSRHDDESPKNPNKKKKGNRNP). PPR repeat units follow at residues 88–123 (PEKS…DIRL), 129–166 (QSLL…GISP), 167–201 (NESS…GGVS), and 204–238 (RLRT…GIVL). One can recognise a PRORP domain in the interval 335–570 (SSAGKCLSCD…KEESLRSWMC (236 aa)). Residues Cys340 and Cys343 each contribute to the Zn(2+) site. Mn(2+) contacts are provided by Asp402, Asp480, Asp481, and Asp499. Zn(2+) is bound by residues His553 and Cys570.

Belongs to the PPR family. P subfamily. Mg(2+) serves as cofactor. Requires Mn(2+) as cofactor.

It is found in the nucleus. The enzyme catalyses Endonucleolytic cleavage of RNA, removing 5'-extranucleotides from tRNA precursor.. Endonuclease RNase P responsible for the 5' maturation of tRNA precursors. Also involved in the maturation of mRNA and small nucleolar RNA (snoRNA). This chain is Proteinaceous RNase P 3 (PRORP3), found in Arabidopsis thaliana (Mouse-ear cress).